The sequence spans 185 residues: Lactoylglutathione lyase (185 aa).

The tract at residues 1–22 (MASEARESPANNPGLSTNRDEA) is disordered. The 148-residue stretch at 27 to 174 (IMQQTMFRIK…DGYWIEIFDL (148 aa)) folds into the VOC domain. The substrate site is built by Gln-30 and Arg-34. Residue Gln-30 participates in Zn(2+) binding. Glu-96 serves as a coordination point for Zn(2+). Substrate-binding positions include Asn-100, Arg-120, His-124, and 154 to 155 (KM). His-124 provides a ligand contact to Zn(2+). Glu-170 contributes to the Zn(2+) binding site. Glu-170 functions as the Proton donor/acceptor in the catalytic mechanism.

Belongs to the glyoxalase I family. Zn(2+) serves as cofactor.

It carries out the reaction (R)-S-lactoylglutathione = methylglyoxal + glutathione. The protein operates within secondary metabolite metabolism; methylglyoxal degradation; (R)-lactate from methylglyoxal: step 1/2. Catalyzes the conversion of hemimercaptal, formed from methylglyoxal and glutathione, to S-lactoylglutathione. The chain is Lactoylglutathione lyase from Arabidopsis thaliana (Mouse-ear cress).